Here is a 44-residue protein sequence, read N- to C-terminus: Non-structural protein 7b (44 aa).

The chain crosses the membrane as a helical span at residues 9 to 29; it reads FYLCFLAFLLFLVLIMLIIFW.

It localises to the host membrane. The protein is Non-structural protein 7b of Bat coronavirus Rp3/2004 (BtCoV/Rp3/2004).